A 542-amino-acid polypeptide reads, in one-letter code: Chaperonin GroEL 3 (542 aa).

ATP is bound by residues 30-33 (TLGP), lysine 51, 87-91 (DGTTT), glycine 415, and aspartate 494. The segment at 523–542 (KPKKKEPPMPAMPSDMGDYD) is disordered.

The protein belongs to the chaperonin (HSP60) family. As to quaternary structure, forms a cylinder of 14 subunits composed of two heptameric rings stacked back-to-back. Interacts with the co-chaperonin GroES.

Its subcellular location is the cytoplasm. The catalysed reaction is ATP + H2O + a folded polypeptide = ADP + phosphate + an unfolded polypeptide.. In terms of biological role, together with its co-chaperonin GroES, plays an essential role in assisting protein folding. The GroEL-GroES system forms a nano-cage that allows encapsulation of the non-native substrate proteins and provides a physical environment optimized to promote and accelerate protein folding. This chain is Chaperonin GroEL 3, found in Syntrophus aciditrophicus (strain SB).